Consider the following 125-residue polypeptide: Large ribosomal subunit protein bL12 (125 aa).

It belongs to the bacterial ribosomal protein bL12 family. In terms of assembly, homodimer. Part of the ribosomal stalk of the 50S ribosomal subunit. Forms a multimeric L10(L12)X complex, where L10 forms an elongated spine to which 2 to 4 L12 dimers bind in a sequential fashion. Binds GTP-bound translation factors.

Its function is as follows. Forms part of the ribosomal stalk which helps the ribosome interact with GTP-bound translation factors. Is thus essential for accurate translation. This Heliobacterium modesticaldum (strain ATCC 51547 / Ice1) protein is Large ribosomal subunit protein bL12.